Consider the following 739-residue polypeptide: Phosphoribosylformylglycinamidine synthase subunit PurL (739 aa).

Residue histidine 54 is part of the active site. 2 residues coordinate ATP: tyrosine 57 and lysine 96. Mg(2+) is bound at residue glutamate 98. Substrate contacts are provided by residues 99 to 102 and arginine 121; that span reads SHNH. Histidine 100 functions as the Proton acceptor in the catalytic mechanism. A Mg(2+)-binding site is contributed by aspartate 122. Position 245 (glutamine 245) interacts with substrate. Position 275 (aspartate 275) interacts with Mg(2+). 319 to 321 contacts substrate; sequence ESQ. 2 residues coordinate ATP: aspartate 504 and glycine 541. Asparagine 542 provides a ligand contact to Mg(2+). Serine 544 contacts substrate.

It belongs to the FGAMS family. Monomer. Part of the FGAM synthase complex composed of 1 PurL, 1 PurQ and 2 PurS subunits.

It is found in the cytoplasm. The catalysed reaction is N(2)-formyl-N(1)-(5-phospho-beta-D-ribosyl)glycinamide + L-glutamine + ATP + H2O = 2-formamido-N(1)-(5-O-phospho-beta-D-ribosyl)acetamidine + L-glutamate + ADP + phosphate + H(+). It participates in purine metabolism; IMP biosynthesis via de novo pathway; 5-amino-1-(5-phospho-D-ribosyl)imidazole from N(2)-formyl-N(1)-(5-phospho-D-ribosyl)glycinamide: step 1/2. In terms of biological role, part of the phosphoribosylformylglycinamidine synthase complex involved in the purines biosynthetic pathway. Catalyzes the ATP-dependent conversion of formylglycinamide ribonucleotide (FGAR) and glutamine to yield formylglycinamidine ribonucleotide (FGAM) and glutamate. The FGAM synthase complex is composed of three subunits. PurQ produces an ammonia molecule by converting glutamine to glutamate. PurL transfers the ammonia molecule to FGAR to form FGAM in an ATP-dependent manner. PurS interacts with PurQ and PurL and is thought to assist in the transfer of the ammonia molecule from PurQ to PurL. This Lactococcus lactis subsp. cremoris (strain SK11) protein is Phosphoribosylformylglycinamidine synthase subunit PurL.